The following is a 310-amino-acid chain: Putative S-adenosyl-L-methionine-dependent methyltransferase Franean1_4929 (310 aa).

The segment at methionine 1–valine 28 is disordered. The span at glycine 9–glycine 24 shows a compositional bias: basic and acidic residues. Residues aspartate 136 and aspartate 165 to leucine 166 each bind S-adenosyl-L-methionine.

This sequence belongs to the UPF0677 family.

In terms of biological role, exhibits S-adenosyl-L-methionine-dependent methyltransferase activity. This Parafrankia sp. (strain EAN1pec) protein is Putative S-adenosyl-L-methionine-dependent methyltransferase Franean1_4929.